The following is a 1083-amino-acid chain: Rho GTPase-activating protein 39 (1083 aa).

Residue S2 is modified to N-acetylserine. WW domains follow at residues 25–58 (NTRLEWVEIIEPRTRERMYANLVTGECVWDPPAG) and 63–97 (RTSENQWWELFDPNTSRFYYYNASTQRTVWHRPQG). The disordered stretch occupies residues 110-154 (KQNTESPRASAESSPGRGSSVSREGSTSSSLEPEPDTEKAQELPA). The span at 117–141 (RASAESSPGRGSSVSREGSTSSSLE) shows a compositional bias: low complexity. The residue at position 169 (S169) is a Phosphoserine. The tract at residues 226–369 (AAQGNGYAPD…NKQGPPSPCQ (144 aa)) is disordered. The span at 245-256 (PSGSQHSPSLQT) shows a compositional bias: polar residues. The segment covering 268 to 280 (PERRPSPFLKRAE) has biased composition (basic and acidic residues). Phosphoserine is present on residues S286, S384, S388, S406, and S407. 2 disordered regions span residues 405–545 (GSSP…EAEG) and 570–599 (MKQRSSWDSQQDGSGYESDGALPLPMPGPV). 2 stretches are compositionally biased toward polar residues: residues 474-488 (SWSSQQDTLSSTGYS) and 573-582 (RSSWDSQQDG). Phosphoserine is present on residues S604, S690, S715, and S726. A MyTH4 domain is found at 722–879 (WSSESIKKPM…PNVEEIRHAK (158 aa)). In terms of domain architecture, Rho-GAP spans 890–1078 (SALQEVMGMQ…VLIQHLDTSF (189 aa)).

Its subcellular location is the nucleus. The polypeptide is Rho GTPase-activating protein 39 (ARHGAP39) (Homo sapiens (Human)).